Here is a 269-residue protein sequence, read N- to C-terminus: 5'-nucleotidase SurE (269 aa).

Residues D11, D12, S43, and N101 each coordinate a divalent metal cation.

The protein belongs to the SurE nucleotidase family. It depends on a divalent metal cation as a cofactor.

It is found in the cytoplasm. The catalysed reaction is a ribonucleoside 5'-phosphate + H2O = a ribonucleoside + phosphate. In terms of biological role, nucleotidase that shows phosphatase activity on nucleoside 5'-monophosphates. The chain is 5'-nucleotidase SurE from Synechococcus sp. (strain CC9605).